Reading from the N-terminus, the 152-residue chain is 3-dehydroquinate dehydratase (152 aa).

Y23 (proton acceptor) is an active-site residue. Substrate is bound by residues N74, H80, and D87. Catalysis depends on H100, which acts as the Proton donor. Residues 101 to 102 (LS) and R111 contribute to the substrate site.

This sequence belongs to the type-II 3-dehydroquinase family. As to quaternary structure, homododecamer.

The enzyme catalyses 3-dehydroquinate = 3-dehydroshikimate + H2O. It functions in the pathway metabolic intermediate biosynthesis; chorismate biosynthesis; chorismate from D-erythrose 4-phosphate and phosphoenolpyruvate: step 3/7. Its function is as follows. Catalyzes a trans-dehydration via an enolate intermediate. The polypeptide is 3-dehydroquinate dehydratase (Clostridium botulinum (strain Langeland / NCTC 10281 / Type F)).